The following is an 87-amino-acid chain: Acetolactate synthase isozyme 2 small subunit (87 aa).

Residues 5–78 form the ACT domain; the sequence is QVNVSARFNP…DVAHVAICQS (74 aa).

As to quaternary structure, tetramer of two large and two small chains. It depends on Mg(2+) as a cofactor. Thiamine diphosphate serves as cofactor.

The enzyme catalyses 2 pyruvate + H(+) = (2S)-2-acetolactate + CO2. The protein operates within amino-acid biosynthesis; L-isoleucine biosynthesis; L-isoleucine from 2-oxobutanoate: step 1/4. It functions in the pathway amino-acid biosynthesis; L-valine biosynthesis; L-valine from pyruvate: step 1/4. This chain is Acetolactate synthase isozyme 2 small subunit (ilvM), found in Escherichia coli O6:H1 (strain CFT073 / ATCC 700928 / UPEC).